A 74-amino-acid polypeptide reads, in one-letter code: Cytochrome c oxidase assembly factor 5 (74 aa).

The CHCH domain maps to 27-65 (QSACVLQEGKSPRQCLKEGNCRALQYSFFECKRSMLDAR). The short motif at 30 to 41 (CVLQEGKSPRQC) is the Cx10C motif element. Disulfide bonds link cysteine 30/cysteine 57 and cysteine 41/cysteine 47. Residue serine 37 is modified to Phosphoserine. The short motif at 47-57 (CRALQYSFFEC) is the Cx9C motif element.

This sequence belongs to the PET191 family.

Its function is as follows. Involved in an early step of the mitochondrial complex IV assembly process. This Mus musculus (Mouse) protein is Cytochrome c oxidase assembly factor 5 (Coa5).